A 121-amino-acid polypeptide reads, in one-letter code: NAD(P)H-quinone oxidoreductase subunit 3, chloroplastic (121 aa).

The next 3 membrane-spanning stretches (helical) occupy residues 10-30 (FWAFLLIACLIPVLAISVSNL), 65-85 (MFALVFVIFDVETVFLYPWAM), and 90-110 (LGIIAFAEVLVFVIILIIGLI).

This sequence belongs to the complex I subunit 3 family. As to quaternary structure, NDH is composed of at least 16 different subunits, 5 of which are encoded in the nucleus.

It is found in the plastid. The protein resides in the chloroplast thylakoid membrane. The catalysed reaction is a plastoquinone + NADH + (n+1) H(+)(in) = a plastoquinol + NAD(+) + n H(+)(out). The enzyme catalyses a plastoquinone + NADPH + (n+1) H(+)(in) = a plastoquinol + NADP(+) + n H(+)(out). Functionally, NDH shuttles electrons from NAD(P)H:plastoquinone, via FMN and iron-sulfur (Fe-S) centers, to quinones in the photosynthetic chain and possibly in a chloroplast respiratory chain. The immediate electron acceptor for the enzyme in this species is believed to be plastoquinone. Couples the redox reaction to proton translocation, and thus conserves the redox energy in a proton gradient. The chain is NAD(P)H-quinone oxidoreductase subunit 3, chloroplastic from Staurastrum punctulatum (Green alga).